The chain runs to 85 residues: MAHKKAGGSTRNGRDSNAQRLGVKRFGGESVLAGNIIVRQRGTKFHAGTNVGCGKDHTLFALTDGKVQFEVKGPKNRKFISIVAE.

Residues 1-21 (MAHKKAGGSTRNGRDSNAQRL) form a disordered region. A compositionally biased stretch (polar residues) spans 9–19 (STRNGRDSNAQ).

It belongs to the bacterial ribosomal protein bL27 family.

This Pectobacterium atrosepticum (strain SCRI 1043 / ATCC BAA-672) (Erwinia carotovora subsp. atroseptica) protein is Large ribosomal subunit protein bL27.